Consider the following 260-residue polypeptide: DNA import protein CedA (260 aa).

6 consecutive transmembrane segments (helical) span residues 13 to 33, 47 to 67, 110 to 130, 140 to 160, 169 to 189, and 220 to 240; these read LLASLTYFIGAAIYALPVPVY, IYVVVWNSIYLGVLLFLGELL, ALIQVVPFGALLTVITSALTF, IVYQYVAVFIATGVLFLSIPF, AFIGSGIVFYVGLPYLPQFLA, and IITSLVIGPVIYIFILVGFSM.

In terms of assembly, forms a complex composed of CedA, CedA1 and CedA2.

The protein localises to the cell membrane. In terms of biological role, part of the Ced system, which is involved in DNA import. The chain is DNA import protein CedA from Sulfolobus acidocaldarius (strain ATCC 33909 / DSM 639 / JCM 8929 / NBRC 15157 / NCIMB 11770).